The sequence spans 334 residues: Ketol-acid reductoisomerase (NADP(+)) (334 aa).

The region spanning 2–181 is the KARI N-terminal Rossmann domain; sequence TKVYYDETVT…GATRAGVIET (180 aa). NADP(+) is bound by residues 25–28, arginine 48, serine 52, and 82–85; these read YGSQ and DEIQ. The active site involves histidine 107. Position 133 (glycine 133) interacts with NADP(+). Positions 182–327 constitute a KARI C-terminal knotted domain; sequence TFKEETETDL…RELREMMPFI (146 aa). Residues aspartate 190, glutamate 194, glutamate 226, and glutamate 230 each coordinate Mg(2+). Serine 251 contacts substrate.

It belongs to the ketol-acid reductoisomerase family. The cofactor is Mg(2+).

It carries out the reaction (2R)-2,3-dihydroxy-3-methylbutanoate + NADP(+) = (2S)-2-acetolactate + NADPH + H(+). It catalyses the reaction (2R,3R)-2,3-dihydroxy-3-methylpentanoate + NADP(+) = (S)-2-ethyl-2-hydroxy-3-oxobutanoate + NADPH + H(+). It participates in amino-acid biosynthesis; L-isoleucine biosynthesis; L-isoleucine from 2-oxobutanoate: step 2/4. The protein operates within amino-acid biosynthesis; L-valine biosynthesis; L-valine from pyruvate: step 2/4. Its function is as follows. Involved in the biosynthesis of branched-chain amino acids (BCAA). Catalyzes an alkyl-migration followed by a ketol-acid reduction of (S)-2-acetolactate (S2AL) to yield (R)-2,3-dihydroxy-isovalerate. In the isomerase reaction, S2AL is rearranged via a Mg-dependent methyl migration to produce 3-hydroxy-3-methyl-2-ketobutyrate (HMKB). In the reductase reaction, this 2-ketoacid undergoes a metal-dependent reduction by NADPH to yield (R)-2,3-dihydroxy-isovalerate. This Staphylococcus epidermidis (strain ATCC 35984 / DSM 28319 / BCRC 17069 / CCUG 31568 / BM 3577 / RP62A) protein is Ketol-acid reductoisomerase (NADP(+)).